A 325-amino-acid polypeptide reads, in one-letter code: Olfactory receptor 6Y1 (325 aa).

Over 1–30 the chain is Extracellular; sequence MTTIILEVDNHTVTTRFILLGFPTRPAFQL. Asn-10 carries N-linked (GlcNAc...) asparagine glycosylation. A helical transmembrane segment spans residues 31–51; sequence LFFSIFLATYLLTLLENLLII. The Cytoplasmic segment spans residues 52 to 59; the sequence is LAIHSDGQ. The helical transmembrane segment at 60-80 threads the bilayer; it reads LHKPMYFFLSHLSFLEMWYVT. The Extracellular segment spans residues 81–104; sequence VISPKMLVDFLSHDKSISFNGCMT. Cys-102 and Cys-194 are oxidised to a cystine. Residues 105–125 form a helical membrane-spanning segment; that stretch reads QLYFFVTFVCTEYILLAIMAF. Over 126-144 the chain is Cytoplasmic; it reads DRYVAICNPLRYPVIMTNQ. Residues 145 to 165 form a helical membrane-spanning segment; it reads LCGTLAGGCWFCGLMTAMIKM. Residues 166 to 202 are Extracellular-facing; the sequence is VFIAQLHYCGMPQINHYFCDISPLLNVSCEDASQAEM. Asn-191 carries an N-linked (GlcNAc...) asparagine glycan. Residues 203 to 222 traverse the membrane as a helical segment; sequence VDFFLALMVIAIPLCVVVAS. The Cytoplasmic segment spans residues 223–242; it reads YAAILATILRIPSAQGRQKA. A helical membrane pass occupies residues 243 to 263; it reads FSTCASHLTVVILFYSMTLFT. At 264–276 the chain is on the extracellular side; it reads YARPKLMYAYNSN. Residues 277–297 traverse the membrane as a helical segment; the sequence is KVVSVLYTVIVPLLNPIIYCL. Over 298–325 the chain is Cytoplasmic; the sequence is RNHEVKAALRKTIHCRGSGPQGNGAFSS.

It belongs to the G-protein coupled receptor 1 family.

Its subcellular location is the cell membrane. In terms of biological role, odorant receptor. The chain is Olfactory receptor 6Y1 (OR6Y1) from Homo sapiens (Human).